A 1286-amino-acid polypeptide reads, in one-letter code: MDRDSLPRVPDTHGDVVDEKLFSDLYIRTSWVDAQVALDQIDKGKARGSRTAIYLRSVFQSHLETLGSSVQKHAGKVLFVAILVLSTFCVGLKSAQIHSKVHQLWIQEGGRLEAELAYTQKTIGEDESATHQLLIQTTHDPNASVLHPQALLAHLEVLVKATAVKVHLYDTEWGLRDMCNMPSTPSFEGIYYIEQILRHLIPCSIITPLDCFWEGSQLLGPESAVVIPGLNQRLLWTTLNPASVMQYMKQKMSEEKISFDFETVEQYMKRAAIGSGYMEKPCLNPLNPNCPDTAPNKNSTQPPDVGAILSGGCYGYAAKHMHWPEELIVGGAKRNRSGHLRKAQALQSVVQLMTEKEMYDQWQDNYKVHHLGWTQEKAAEVLNAWQRNFSREVEQLLRKQSRIATNYDIYVFSSAALDDILAKFSHPSALSIVIGVAVTVLYAFCTLLRWRDPVRGQSSVGVAGVLLMCFSTAAGLGLSALLGIVFNAASTQVVPFLALGLGVDHIFMLTAAYAESNRREQTKLILKKVGPSILFSACSTAGSFFAAAFIPVPALKVFCLQAAIVMCSNLAAALLVFPAMISLDLRRRTAGRADIFCCCFPVWKEQPKVAPPVLPLNNNNGRGARHPKSCNNNRVPLPAQNPLLEQRADIPGSSHSLASFSLATFAFQHYTPFLMRSWVKFLTVMGFLAALISSLYASTRLQDGLDIIDLVPKDSNEHKFLDAQTRLFGFYSMYAVTQGNFEYPTQQQLLRDYHDSFVRVPHVIKNDNGGLPDFWLLLFSEWLGNLQKIFDEEYRDGRLTKECWFPNASSDAILAYKLIVQTGHVDNPVDKELVLTNRLVNSDGIINQRAFYNYLSAWATNDVFAYGASQGKLYPEPRQYFHQPNEYDLKIPKSLPLVYAQMPFYLHGLTDTSQIKTLIGHIRDLSVKYEGFGLPNYPSGIPFIFWEQYMTLRSSLAMILACVLLAALVLVSLLLLSVWAAVLVILSVLASLAQIFGAMTLLGIKLSAIPAVILILSVGMMLCFNVLISLGFMTSVGNRQRRVQLSMQMSLGPLVHGMLTSGVAVFMLSTSPFEFVIRHFCWLLLVVLCVGACNSLLVFPILLSMVGPEAELVPLEHPDRISTPSPLPVRSSKRSGKSYVVQGSRSSRGSCQKSHHHHHKDLNDPSLTTITEEPQSWKSSNSSIQMPNDWTYQPREQRPASYAAPPPAYHKAAAQQHHQHQGPPTTPPPPFPTAYPPELQSIVVQPEVTVETTHSDSNTTKVTATANIKVELAMPGRAVRSYNFTS.

The Cytoplasmic segment spans residues 1-76; sequence MDRDSLPRVP…GSSVQKHAGK (76 aa). Residues 77-92 form a helical membrane-spanning segment; sequence VLFVAILVLSTFCVGL. The Extracellular portion of the chain corresponds to 93 to 427; sequence KSAQIHSKVH…DDILAKFSHP (335 aa). Residues Asn142, Asn298, Asn335, and Asn388 are each glycosylated (N-linked (GlcNAc...) asparagine). The helical transmembrane segment at 428-448 threads the bilayer; the sequence is SALSIVIGVAVTVLYAFCTLL. Positions 428 to 583 constitute an SSD domain; sequence SALSIVIGVA…LLVFPAMISL (156 aa). Residues 449–465 lie on the Cytoplasmic side of the membrane; the sequence is RWRDPVRGQSSVGVAGV. Residues 466–486 form a helical membrane-spanning segment; that stretch reads LLMCFSTAAGLGLSALLGIVF. Topologically, residues 487 to 492 are extracellular; that stretch reads NAASTQ. The helical transmembrane segment at 493–511 threads the bilayer; sequence VVPFLALGLGVDHIFMLTA. At 512–532 the chain is on the cytoplasmic side; sequence AYAESNRREQTKLILKKVGPS. The helical transmembrane segment at 533 to 553 threads the bilayer; the sequence is ILFSACSTAGSFFAAAFIPVP. Over 554–562 the chain is Extracellular; sequence ALKVFCLQA. The chain crosses the membrane as a helical span at residues 563–583; it reads AIVMCSNLAAALLVFPAMISL. Over 584 to 677 the chain is Cytoplasmic; sequence DLRRRTAGRA…QHYTPFLMRS (94 aa). A helical membrane pass occupies residues 678–699; sequence WVKFLTVMGFLAALISSLYAST. Over 700–931 the chain is Extracellular; sequence RLQDGLDIID…IRDLSVKYEG (232 aa). N-linked (GlcNAc...) asparagine glycosylation is present at Asn807. A helical transmembrane segment spans residues 932 to 952; it reads FGLPNYPSGIPFIFWEQYMTL. At 953 to 955 the chain is on the cytoplasmic side; that stretch reads RSS. A helical membrane pass occupies residues 956 to 976; the sequence is LAMILACVLLAALVLVSLLLL. At 977–1007 the chain is on the extracellular side; sequence SVWAAVLVILSVLASLAQIFGAMTLLGIKLS. A helical transmembrane segment spans residues 1008–1028; that stretch reads AIPAVILILSVGMMLCFNVLI. Residues 1029 to 1056 lie on the Cytoplasmic side of the membrane; it reads SLGFMTSVGNRQRRVQLSMQMSLGPLVH. The chain crosses the membrane as a helical span at residues 1057 to 1077; sequence GMLTSGVAVFMLSTSPFEFVI. Over 1078-1082 the chain is Extracellular; that stretch reads RHFCW. Residues 1083–1103 form a helical membrane-spanning segment; it reads LLLVVLCVGACNSLLVFPILL. Topologically, residues 1104–1286 are cytoplasmic; that stretch reads SMVGPEAELV…RAVRSYNFTS (183 aa). Positions 1116-1237 are disordered; that stretch reads EHPDRISTPS…PPPFPTAYPP (122 aa). 2 stretches are compositionally biased toward polar residues: residues 1141 to 1152 and 1165 to 1191; these read VQGSRSSRGSCQ and PSLT…NDWT. The span at 1199–1216 shows a compositional bias: low complexity; sequence PASYAAPPPAYHKAAAQQ. The segment covering 1224–1235 has biased composition (pro residues); sequence PTTPPPPFPTAY.

Belongs to the patched family. In terms of assembly, interacts (via C-terminal cytoplasmic region) with CG5504/l(2)tid; the interaction is probably direct. Interacts with hh/hedgehog.

It is found in the membrane. In terms of biological role, segmentation polarity protein. Acts as a receptor for the hedgehog protein (hh). Associates with the smoothened protein (SMO) to transduce the hedgehog signal leading to the activation of wingless, decapentaplegic and patched itself. Participates in cell interactions that establish pattern within the segment and the imaginal disks during development. In the absence of HH, represses the constitutive signaling activity of smo through fused (FU). This is Protein patched from Drosophila melanogaster (Fruit fly).